The chain runs to 185 residues: Ribosome-recycling factor (185 aa).

This sequence belongs to the RRF family.

It localises to the cytoplasm. Functionally, responsible for the release of ribosomes from messenger RNA at the termination of protein biosynthesis. May increase the efficiency of translation by recycling ribosomes from one round of translation to another. The polypeptide is Ribosome-recycling factor (Bacillus anthracis (strain CDC 684 / NRRL 3495)).